We begin with the raw amino-acid sequence, 233 residues long: B-cell lymphoma/leukemia 10 (233 aa).

The residue at position 1 (Met-1) is an N-acetylmethionine. Residues 13-101 (LTEVKKDALE…QSFLIQKITD (89 aa)) form the CARD domain. Glycyl lysine isopeptide (Lys-Gly) (interchain with G-Cter in ubiquitin) cross-links involve residues Lys-17, Lys-31, and Lys-63. At Ser-138 the chain carries Phosphoserine. Residues 185–233 (SSFSSATLPRPGDPGAPPLPPDLRLEEGGSCGNSSEMFLPLRSRALSRQ) form a disordered region. The span at 195–205 (PGDPGAPPLPP) shows a compositional bias: pro residues.

As to quaternary structure, homomultimer; homooligomerized following recruitment by CARD domain-containing proteins that form a nucleating helical template that recruits BCL10 via CARD-CARD interaction. Self-associates by CARD-CARD interaction and interacts with other CARD-proteins such as CARD9, CARD10, CARD11 and CARD14. Forms a complex with CARD14 and MALT1; resulting in the formation of a CBM (CARD14-BCL10-MALT1) complex. Forms a complex with CARD11 and MALT1; resulting in the formation of a CBM (CARD11-BCL10-MALT1) complex. Forms a complex with CARD9 and MALT1; resulting in the formation of a CBM (CARD9-BCL10-MALT1) complex. Found in a membrane raft complex, at least composed of BCL10, CARD11, DPP4 and IKBKB. Binds caspase-9 with its C-terminal domain. Interacts with TRAF2 and BIRC2/c-IAP2. Interacts with PELI2 and SOCS3; these interactions may be mutually exclusive. Phosphorylated by IKBKB/IKKB. Post-translationally, ubiquitinated via both 'Lys-63'-linked and linear ('Met-1'-linked) polyubiquitin chains in response to T-cell receptor (TCR) activation. Ubiquitination is recognized by IKBKG/NEMO, the regulatory subunit of I-kappa-B kinase (IKK), and is required for TCR-induced NF-kappa-B activation. Linear ubiquitination at Lys-17, Lys-31 and Lys-63 is mediated by RNF31/HOIP; linear ubiquitination is recognized with much higher affinity than 'Lys-63'-linked ubiquitin by IKBKG/NEMO. CARD11 is required for linear ubiquitination by HOIP by promoting the targeting of BCL10 to RNF31/HOIP. In terms of processing, proteolytically cleaved by MALT1; required for T-cell activation. Highly expressed in heart, brain, spleen, lung, liver, skeletal muscle, kidney and testis. Detected in developing brain, olfactory epithelium, tongue, whisker follicles, salivary gland, heart, lung, liver and intestinal epithelia of stage 15 embryos.

It is found in the cytoplasm. Its subcellular location is the membrane raft. Its function is as follows. Plays a key role in both adaptive and innate immune signaling by bridging CARD domain-containing proteins to immune activation. Acts by channeling adaptive and innate immune signaling downstream of CARD domain-containing proteins CARD9, CARD11 and CARD14 to activate NF-kappa-B and MAP kinase p38 (MAPK11, MAPK12, MAPK13 and/or MAPK14) pathways which stimulate expression of genes encoding pro-inflammatory cytokines and chemokines. Recruited by activated CARD domain-containing proteins: homooligomerized CARD domain-containing proteins form a nucleating helical template that recruits BCL10 via CARD-CARD interaction, thereby promoting polymerization of BCL10, subsequent recruitment of MALT1 and formation of a CBM complex. This leads to activation of NF-kappa-B and MAP kinase p38 (MAPK11, MAPK12, MAPK13 and/or MAPK14) pathways which stimulate expression of genes encoding pro-inflammatory cytokines and chemokines. Activated by CARD9 downstream of C-type lectin receptors; CARD9-mediated signals are essential for antifungal immunity. Activated by CARD11 downstream of T-cell receptor (TCR) and B-cell receptor (BCR). Promotes apoptosis, pro-caspase-9 maturation and activation of NF-kappa-B via NIK and IKK. In Mus musculus (Mouse), this protein is B-cell lymphoma/leukemia 10 (Bcl10).